The sequence spans 131 residues: UPF0102 protein YraN (131 aa).

The span at 1 to 19 (MATVPTRSGSPRQLTTKQT) shows a compositional bias: polar residues. The segment at 1-21 (MATVPTRSGSPRQLTTKQTGD) is disordered.

This sequence belongs to the UPF0102 family.

The chain is UPF0102 protein YraN from Escherichia coli O7:K1 (strain IAI39 / ExPEC).